We begin with the raw amino-acid sequence, 629 residues long: Citrate (Re)-synthase (629 aa).

Residues 59 to 329 (IFITDTTFRD…TNGIDTTVIT (271 aa)) enclose the Pyruvate carboxyltransferase domain. Residues 497-601 (VMQRFIEEYP…GVDIRVEDLV (105 aa)) enclose the Cache domain.

The protein belongs to the alpha-IPM synthase/homocitrate synthase family. In terms of assembly, homotetramer. Co(2+) serves as cofactor. Mn(2+) is required as a cofactor.

It catalyses the reaction oxaloacetate + acetyl-CoA + H2O = citrate + CoA + H(+). Its activity is regulated as follows. Inhibited by p-hydroxymercuribenzoate and EDTA. In terms of biological role, catalyzes the condensation of the acetyl group of acetyl-CoA with oxaloacetate to form citrate. This chain is Citrate (Re)-synthase, found in Syntrophus aciditrophicus (strain SB).